The chain runs to 123 residues: Small ribosomal subunit protein uS12 (123 aa).

The segment at 1-26 (MPTINQLVRKPRKSRSSLNKAPALQH) is disordered. At Asp-90 the chain carries 3-methylthioaspartic acid.

The protein belongs to the universal ribosomal protein uS12 family. In terms of assembly, part of the 30S ribosomal subunit. Contacts proteins S8 and S17. May interact with IF1 in the 30S initiation complex.

With S4 and S5 plays an important role in translational accuracy. Its function is as follows. Interacts with and stabilizes bases of the 16S rRNA that are involved in tRNA selection in the A site and with the mRNA backbone. Located at the interface of the 30S and 50S subunits, it traverses the body of the 30S subunit contacting proteins on the other side and probably holding the rRNA structure together. The combined cluster of proteins S8, S12 and S17 appears to hold together the shoulder and platform of the 30S subunit. The protein is Small ribosomal subunit protein uS12 of Ehrlichia chaffeensis (strain ATCC CRL-10679 / Arkansas).